The chain runs to 273 residues: Homeobox protein Hox-C13b (273 aa).

The homeobox DNA-binding region spans 201–260 (GRKKRVPYTKIQLKELEKEYAASKFITKDRRRRISATTSLSERQVTIWFQNRRVKEKKFV).

This sequence belongs to the Abd-B homeobox family.

Its subcellular location is the nucleus. Sequence-specific transcription factor which is part of a developmental regulatory system that provides cells with specific positional identities on the anterior-posterior axis. Plays a role in early embryonic development. This Danio rerio (Zebrafish) protein is Homeobox protein Hox-C13b (hoxc13b).